We begin with the raw amino-acid sequence, 553 residues long: Coiled-coil domain-containing protein 22 homolog (553 aa).

Coiled coils occupy residues 261–404 and 498–553; these read LEEL…TATQ and NVTK…VAKA.

The protein belongs to the CCDC22 family.

The polypeptide is Coiled-coil domain-containing protein 22 homolog (Drosophila pseudoobscura pseudoobscura (Fruit fly)).